The sequence spans 49 residues: uncharacterized protein (49 aa).

The N-terminal stretch at 1 to 22 (MVFLLFLSFVLSSIFLVPLVYM) is a signal peptide.

Its subcellular location is the secreted. This is an uncharacterized protein from Dictyostelium discoideum (Social amoeba).